The primary structure comprises 364 residues: DNA replication and repair protein RecF (364 aa).

Residue 30–37 (GNNAQGKT) coordinates ATP.

This sequence belongs to the RecF family.

Its subcellular location is the cytoplasm. Functionally, the RecF protein is involved in DNA metabolism; it is required for DNA replication and normal SOS inducibility. RecF binds preferentially to single-stranded, linear DNA. It also seems to bind ATP. In Clostridium botulinum (strain 657 / Type Ba4), this protein is DNA replication and repair protein RecF.